Reading from the N-terminus, the 449-residue chain is Probable glycine dehydrogenase (decarboxylating) subunit 1 (449 aa).

It belongs to the GcvP family. N-terminal subunit subfamily. As to quaternary structure, the glycine cleavage system is composed of four proteins: P, T, L and H. In this organism, the P 'protein' is a heterodimer of two subunits.

It catalyses the reaction N(6)-[(R)-lipoyl]-L-lysyl-[glycine-cleavage complex H protein] + glycine + H(+) = N(6)-[(R)-S(8)-aminomethyldihydrolipoyl]-L-lysyl-[glycine-cleavage complex H protein] + CO2. In terms of biological role, the glycine cleavage system catalyzes the degradation of glycine. The P protein binds the alpha-amino group of glycine through its pyridoxal phosphate cofactor; CO(2) is released and the remaining methylamine moiety is then transferred to the lipoamide cofactor of the H protein. This chain is Probable glycine dehydrogenase (decarboxylating) subunit 1, found in Pyrococcus abyssi (strain GE5 / Orsay).